The following is a 320-amino-acid chain: Acetyl-coenzyme A carboxylase carboxyl transferase subunit beta (320 aa).

One can recognise a CoA carboxyltransferase N-terminal domain in the interval 25-294; sequence LWRKCPECGT…AIVGDLPAPD (270 aa). Residues Cys29, Cys32, Cys48, and Cys51 each contribute to the Zn(2+) site. The C4-type zinc-finger motif lies at 29-51; sequence CPECGTMLFHRELSDNLFVCISC. Residues 290 to 320 are disordered; sequence LPAPDPAPATPEPQKAAPSAPAQDKPGAGRS.

Belongs to the AccD/PCCB family. In terms of assembly, acetyl-CoA carboxylase is a heterohexamer composed of biotin carboxyl carrier protein (AccB), biotin carboxylase (AccC) and two subunits each of ACCase subunit alpha (AccA) and ACCase subunit beta (AccD). It depends on Zn(2+) as a cofactor.

The protein resides in the cytoplasm. It carries out the reaction N(6)-carboxybiotinyl-L-lysyl-[protein] + acetyl-CoA = N(6)-biotinyl-L-lysyl-[protein] + malonyl-CoA. It participates in lipid metabolism; malonyl-CoA biosynthesis; malonyl-CoA from acetyl-CoA: step 1/1. In terms of biological role, component of the acetyl coenzyme A carboxylase (ACC) complex. Biotin carboxylase (BC) catalyzes the carboxylation of biotin on its carrier protein (BCCP) and then the CO(2) group is transferred by the transcarboxylase to acetyl-CoA to form malonyl-CoA. The chain is Acetyl-coenzyme A carboxylase carboxyl transferase subunit beta from Dinoroseobacter shibae (strain DSM 16493 / NCIMB 14021 / DFL 12).